Consider the following 284-residue polypeptide: Protein-S-isoprenylcysteine O-methyltransferase (284 aa).

Topologically, residues 1-16 are cytoplasmic; it reads MAGCAARAPPGSEARL. Residues 17-33 form a helical membrane-spanning segment; the sequence is SLATFLLGASVLALPLL. Residues 34–41 are Lumenal-facing; that stretch reads TRAGLQGR. The chain crosses the membrane as a helical span at residues 42–59; the sequence is TGLALYVAGLNALLLLLY. The Cytoplasmic portion of the chain corresponds to 60-69; sequence RPPRYQIAIR. The chain crosses the membrane as a helical span at residues 70–87; that stretch reads ACFLGFVFGCGTLLSFSQ. The Lumenal portion of the chain corresponds to 88-92; it reads SSWSH. Residues 93–112 traverse the membrane as a helical segment; it reads FGWYMCSLSLFHYSEYLVTA. Residues 113–131 lie on the Cytoplasmic side of the membrane; it reads VNNPKSLSLDSFLLNHSLE. The helical transmembrane segment at 132 to 149 threads the bilayer; sequence YTVAALSSWLEFTLENIF. The Lumenal portion of the chain corresponds to 150–154; sequence WPELK. The helical transmembrane segment at 155-174 threads the bilayer; it reads QITWLSVTGLLMVVFGECLR. Residues 175 to 212 lie on the Cytoplasmic side of the membrane; that stretch reads KAAMFTAGSNFNHVVQNEKSDTHTLVTSGVYAWFRHPS. S-adenosyl-L-methionine contacts are provided by residues Gln-190, 197–200, Tyr-205, and 210–213; these read HTLV and HPSY. The chain crosses the membrane as a helical span at residues 213-228; it reads YVGWFYWSIGTQVMLC. Position 229 (Asn-229) is a topological domain, lumenal. Residues 230-244 traverse the membrane as a helical segment; it reads PICGVSYALTVWRFF. The Cytoplasmic portion of the chain corresponds to 245–284; it reads RDRTEEEEISLIHFFGEEYLEYKKRVPTGLPFIKGVKVDL. Substrate is bound at residue Arg-247. Glu-251 contributes to the S-adenosyl-L-methionine binding site.

It belongs to the class VI-like SAM-binding methyltransferase superfamily. Isoprenylcysteine carboxyl methyltransferase family. As to expression, ubiquitously expressed. Expressed at higher levels in the cerebellum and putamen than in other brain regions. Abundant expression seen in the Purkinje cells and pontine neurons.

The protein resides in the endoplasmic reticulum membrane. The catalysed reaction is [protein]-C-terminal S-[(2E,6E)-farnesyl]-L-cysteine + S-adenosyl-L-methionine = [protein]-C-terminal S-[(2E,6E)-farnesyl]-L-cysteine methyl ester + S-adenosyl-L-homocysteine. Its activity is regulated as follows. Competitively inhibited by N-acetyl-S-trans,trans-farnesyl-l-cysteine (AFC). In terms of biological role, catalyzes the post-translational methylation of isoprenylated C-terminal cysteine residues. This Homo sapiens (Human) protein is Protein-S-isoprenylcysteine O-methyltransferase (ICMT).